Here is a 196-residue protein sequence, read N- to C-terminus: MLDRIKVCFTESIQTQIAAAEALPDAISRGAIAMVQSLLNGNKILCCGNGTSAANAQHFAASMINRFEAERPSLPAIALNADNVVLTAIANDRLHEEVYAKQVRALGQAGDVLLAISTRGNSRDIVKAVESAVTRDMTIVALTGYDGGELAGLLGPQDVEIRIPSHRSARIQEMHMLTVNCLCDLIDNTLFPHQND.

Residues 34 to 196 (MVQSLLNGNK…DNTLFPHQND (163 aa)) form the SIS domain.

This sequence belongs to the SIS family. DiaA subfamily. Homotetramer; dimer of dimers.

Its function is as follows. Required for the timely initiation of chromosomal replication via direct interactions with the DnaA initiator protein. The sequence is that of DnaA initiator-associating protein DiaA from Pectobacterium carotovorum subsp. carotovorum (strain PC1).